A 374-amino-acid chain; its full sequence is N-acetyldiaminopimelate deacetylase (374 aa).

D68 is an active-site residue. Catalysis depends on E127, which acts as the Proton acceptor.

This sequence belongs to the peptidase M20A family. N-acetyldiaminopimelate deacetylase subfamily.

The catalysed reaction is N-acetyl-(2S,6S)-2,6-diaminopimelate + H2O = (2S,6S)-2,6-diaminopimelate + acetate. Its pathway is amino-acid biosynthesis; L-lysine biosynthesis via DAP pathway; LL-2,6-diaminopimelate from (S)-tetrahydrodipicolinate (acetylase route): step 3/3. Its function is as follows. Catalyzes the conversion of N-acetyl-diaminopimelate to diaminopimelate and acetate. The sequence is that of N-acetyldiaminopimelate deacetylase from Shouchella clausii (strain KSM-K16) (Alkalihalobacillus clausii).